Reading from the N-terminus, the 33-residue chain is Imperacalcin (33 aa).

3 disulfides stabilise this stretch: cysteine 3-cysteine 17, cysteine 10-cysteine 21, and cysteine 16-cysteine 32. Important for stimulation of [3H]ryanodine binding to RYR1 regions lie at residues 8–9 and 19–20; these read KR and KK. The interval 22–24 is essential for stimulation of [3H]ryanodine binding to RYR1; that stretch reads KRR. Residues 25-27 form an important for stimulation of [3H]ryanodine binding to RYR1 region; sequence GTN.

Belongs to the scorpion calcin family. As to expression, expressed by the venom gland.

The protein localises to the secreted. This toxin affects the activity of ryanodine receptors 1, 2 and 3 (RyR1, RyR2 and RyR3). At lower concentrations the toxin increases full openings of the RyRs, and at higher concentrations it inhibits full openings and induces openings to subconductance levels (30% of the full conductance state) and reduces the number of full conductance openings. The different actions may be attributed to the toxins binding at different sites on the RyRs, with binding at a high-affinity site mediating the increase in full openings and the induction of subconductance states evoked upon binding to a lower-affinity site. Furthermore, it triggers calcium release from sarcoplasmic vesicles (11.7 nM are enough to induce a sharp release, and 70% of the total calcium is released after toxin (100 nM) addition) probably by acting as a cell-penetrating peptide (CPP). In addition, it has been shown to dose-dependently stimulate ryanodine binding to RyR1 (EC(50)=8.7 nM). It also augments the bell-shaped calcium-[3H]ryanodine binding curve that is maximal at about 10 uM calcium concentration. It binds a different site as ryanodine. It acts synergistically with caffeine. In vivo, intracerebroventricular injection into mice induces neurotoxic symptoms, followed by death. The protein is Imperacalcin of Pandinus imperator (Emperor scorpion).